We begin with the raw amino-acid sequence, 447 residues long: GTPase Der (447 aa).

2 EngA-type G domains span residues 4-165 and 180-357; these read QIIT…PEEE and LQIV…KIWN. Residues 10–17, 57–61, 119–122, 186–193, 233–237, and 298–301 each bind GTP; these read GRPNVGKS, DTPGL, NKCE, GRPNAGKS, DTAGL, and NKWD. The KH-like domain occupies 358 to 443; sequence KKITTSKLNE…PIRFIYVKTK (86 aa).

The protein belongs to the TRAFAC class TrmE-Era-EngA-EngB-Septin-like GTPase superfamily. EngA (Der) GTPase family. Associates with the 50S ribosomal subunit.

GTPase that plays an essential role in the late steps of ribosome biogenesis. In Rickettsia peacockii (strain Rustic), this protein is GTPase Der.